Reading from the N-terminus, the 578-residue chain is Laccase-10 (578 aa).

A signal peptide spans 1–29 (MGARCLALLLLYGTLLLLLLLPQLPLAGA). Plastocyanin-like domains are found at residues 37–153 (NVKL…PKAG) and 163–319 (KDVP…YAPP). N-linked (GlcNAc...) asparagine glycans are attached at residues N42 and N83. The Cu cation site is built by H87 and H89. An N-linked (GlcNAc...) asparagine glycan is attached at N119. 2 residues coordinate Cu cation: H132 and H134. N-linked (GlcNAc...) asparagine glycans are attached at residues N192, N208, N244, N307, N336, N384, N392, N402, N438, N445, N448, N451, and N461. One can recognise a Plastocyanin-like 3 domain in the interval 428–562 (DFPASPLEPF…KMAWVVNDGP (135 aa)). Residues H479, H482, H484, H541, C542, H543, and H547 each coordinate Cu cation.

Belongs to the multicopper oxidase family. Cu cation is required as a cofactor.

Its subcellular location is the secreted. It localises to the extracellular space. It is found in the apoplast. It carries out the reaction 4 hydroquinone + O2 = 4 benzosemiquinone + 2 H2O. Its function is as follows. Lignin degradation and detoxification of lignin-derived products. In Oryza sativa subsp. japonica (Rice), this protein is Laccase-10 (LAC10).